The following is a 388-amino-acid chain: Flap endonuclease 1 (388 aa).

An N-domain region spans residues 1 to 104 (MGILGLSKLI…GELAKRAERR (104 aa)). Mg(2+) is bound at residue Asp34. DNA-binding residues include Arg47 and Arg70. Residues Asp86, Glu158, Glu160, Asp179, and Asp181 each coordinate Mg(2+). The segment at 122-253 (EIEKFNRRLV…KRAIELINNY (132 aa)) is I-domain. Glu158 provides a ligand contact to DNA. DNA contacts are provided by Gly231 and Asp233. A Mg(2+)-binding site is contributed by Asp233. The segment at 336 to 344 (TQVRLDSFF) is interaction with PCNA. Residues 343–388 (FFKTLPSTPSATNAAKRKAEEAKKSANNKKAKTSGGGGGGRGRRPK) form a disordered region.

It belongs to the XPG/RAD2 endonuclease family. FEN1 subfamily. As to quaternary structure, interacts with PCNA. Three molecules of FEN1 bind to one PCNA trimer with each molecule binding to one PCNA monomer. PCNA stimulates the nuclease activity without altering cleavage specificity. It depends on Mg(2+) as a cofactor. In terms of processing, phosphorylated. Phosphorylation upon DNA damage induces relocalization to the nuclear plasma.

The protein localises to the nucleus. It localises to the nucleolus. The protein resides in the nucleoplasm. Its subcellular location is the mitochondrion. Functionally, structure-specific nuclease with 5'-flap endonuclease and 5'-3' exonuclease activities involved in DNA replication and repair. During DNA replication, cleaves the 5'-overhanging flap structure that is generated by displacement synthesis when DNA polymerase encounters the 5'-end of a downstream Okazaki fragment. It enters the flap from the 5'-end and then tracks to cleave the flap base, leaving a nick for ligation. Also involved in the long patch base excision repair (LP-BER) pathway, by cleaving within the apurinic/apyrimidinic (AP) site-terminated flap. Acts as a genome stabilization factor that prevents flaps from equilibrating into structures that lead to duplications and deletions. Also possesses 5'-3' exonuclease activity on nicked or gapped double-stranded DNA, and exhibits RNase H activity. Also involved in replication and repair of rDNA and in repairing mitochondrial DNA. This is Flap endonuclease 1 from Drosophila ananassae (Fruit fly).